A 404-amino-acid chain; its full sequence is Probable tRNA sulfurtransferase (404 aa).

The THUMP domain occupies 60–165 (TAVAESLKQV…EEAAYLSYET (106 aa)). ATP contacts are provided by residues 183-184 (ML), 208-209 (HF), Arg265, Gly287, and Gln296.

Belongs to the ThiI family.

Its subcellular location is the cytoplasm. The catalysed reaction is [ThiI sulfur-carrier protein]-S-sulfanyl-L-cysteine + a uridine in tRNA + 2 reduced [2Fe-2S]-[ferredoxin] + ATP + H(+) = [ThiI sulfur-carrier protein]-L-cysteine + a 4-thiouridine in tRNA + 2 oxidized [2Fe-2S]-[ferredoxin] + AMP + diphosphate. It carries out the reaction [ThiS sulfur-carrier protein]-C-terminal Gly-Gly-AMP + S-sulfanyl-L-cysteinyl-[cysteine desulfurase] + AH2 = [ThiS sulfur-carrier protein]-C-terminal-Gly-aminoethanethioate + L-cysteinyl-[cysteine desulfurase] + A + AMP + 2 H(+). It participates in cofactor biosynthesis; thiamine diphosphate biosynthesis. In terms of biological role, catalyzes the ATP-dependent transfer of a sulfur to tRNA to produce 4-thiouridine in position 8 of tRNAs, which functions as a near-UV photosensor. Also catalyzes the transfer of sulfur to the sulfur carrier protein ThiS, forming ThiS-thiocarboxylate. This is a step in the synthesis of thiazole, in the thiamine biosynthesis pathway. The sulfur is donated as persulfide by IscS. This Streptococcus pneumoniae serotype 19F (strain G54) protein is Probable tRNA sulfurtransferase.